Reading from the N-terminus, the 58-residue chain is MHDHGFLQVTLPSPLPCASQPRKLSHRNLLHHRCVQQNQPYPSRRCHRLIQRQLTTIL.

This is an uncharacterized protein from Phaseolus vulgaris (Kidney bean).